Consider the following 333-residue polypeptide: Uroporphyrinogen decarboxylase (333 aa).

Substrate is bound by residues 21–25, D70, Y139, S194, and H309; that span reads RQVGR.

The protein belongs to the uroporphyrinogen decarboxylase family. As to quaternary structure, homodimer.

Its subcellular location is the cytoplasm. It carries out the reaction uroporphyrinogen III + 4 H(+) = coproporphyrinogen III + 4 CO2. Its pathway is porphyrin-containing compound metabolism; protoporphyrin-IX biosynthesis; coproporphyrinogen-III from 5-aminolevulinate: step 4/4. Its function is as follows. Catalyzes the decarboxylation of four acetate groups of uroporphyrinogen-III to yield coproporphyrinogen-III. The protein is Uroporphyrinogen decarboxylase of Chlamydia caviae (strain ATCC VR-813 / DSM 19441 / 03DC25 / GPIC) (Chlamydophila caviae).